We begin with the raw amino-acid sequence, 106 residues long: Colipase A (106 aa).

Positions 1–11 are cleaved as a signal peptide; that stretch reads LLLVALAVAYA. Positions 12–16 are cleaved as a propeptide — enterostatin, activation peptide; it reads VPDPR. Intrachain disulfides connect Cys-28–Cys-39, Cys-34–Cys-50, Cys-38–Cys-72, Cys-60–Cys-80, and Cys-74–Cys-98. Trp-63 lines the taurodeoxycholate pocket.

This sequence belongs to the colipase family. As to quaternary structure, forms a 1:1 stoichiometric complex with pancreatic lipase. In terms of tissue distribution, expressed by the pancreas.

It is found in the secreted. Colipase is a cofactor of pancreatic lipase. It allows the lipase to anchor itself to the lipid-water interface. Without colipase the enzyme is washed off by bile salts, which have an inhibitory effect on the lipase. Functionally, enterostatin has a biological activity as a satiety signal. The sequence is that of Colipase A (CLPS1) from Equus caballus (Horse).